Here is a 562-residue protein sequence, read N- to C-terminus: RNA N(6)-adenosine-methyltransferase METTL16 (562 aa).

Residues 17 to 20 (PPDF) form an RNA-binding region. The S-adenosyl-L-methionine site is built by Arg82, Gly110, Ser114, Glu133, Thr164, and Asn184. Residues 163 to 167 (KTLLM) form a K-loop region. 3 RNA-binding regions span residues 199 to 211 (SRNPRRPPPSSVN), 250 to 254 (GKKCS), and 277 to 283 (QGRTMRW). The VCR 1 stretch occupies residues 289–400 (FYDDVTVPSP…QLREVPRAPE (112 aa)). The residue at position 329 (Ser329) is a Phosphoserine. Residues 402-413 (VIQALEEKKPTP) show a composition bias toward basic and acidic residues. The interval 402-498 (VIQALEEKKP…DQEASEQFGS (97 aa)) is disordered. The segment covering 458–467 (ENPEPTEDER) has biased composition (acidic residues). A Phosphothreonine modification is found at Thr463. Residues 480-496 (CQGSSNGAQDQEASEQF) show a composition bias toward polar residues. A VCR 2 region spans residues 514 to 562 (YLFKCLINVKKEVDDALVEMHWVEGQNRDLMNQLCTYIRNQIFRLVAVN).

This sequence belongs to the methyltransferase superfamily. METTL16/RlmF family. In terms of assembly, interacts with MEPCE. Interacts with LARP7.

The protein resides in the nucleus. It localises to the cytoplasm. The catalysed reaction is adenosine in U6 snRNA + S-adenosyl-L-methionine = N(6)-methyladenosine in U6 snRNA + S-adenosyl-L-homocysteine + H(+). The enzyme catalyses an adenosine in mRNA + S-adenosyl-L-methionine = an N(6)-methyladenosine in mRNA + S-adenosyl-L-homocysteine + H(+). With respect to regulation, methyltransferase activity is autoinhibited by the K-loop region that blocks S-adenosyl-L-methionine-binding. Upon activation, K-loop changes conformation, allowing S-adenosyl-L-methionine-binding and subsequent methyltransferase activity. mRNA N6-adenosine-methyltransferase activity is inhibited by zinc. RNA N6-methyltransferase that methylates adenosine residues at the N(6) position of a subset of RNAs and is involved in S-adenosyl-L-methionine homeostasis by regulating expression of MAT2A transcripts. Able to N6-methylate a subset of mRNAs and U6 small nuclear RNAs (U6 snRNAs). In contrast to the METTL3-METTL14 heterodimer, only able to methylate a limited number of RNAs: requires both a 5'UACAGAGAA-3' nonamer sequence and a specific RNA structure. Plays a key role in S-adenosyl-L-methionine homeostasis by mediating N6-methylation of MAT2A mRNAs, altering splicing of MAT2A transcripts: in presence of S-adenosyl-L-methionine, binds the 3'-UTR region of MAT2A mRNA and specifically N6-methylates the first hairpin of MAT2A mRNA, preventing recognition of their 3'-splice site by U2AF1/U2AF35, thereby inhibiting splicing and protein production of S-adenosylmethionine synthase. In S-adenosyl-L-methionine-limiting conditions, binds the 3'-UTR region of MAT2A mRNA but stalls due to the lack of a methyl donor, preventing N6-methylation and promoting expression of MAT2A. In addition to mRNAs, also able to mediate N6-methylation of U6 small nuclear RNA (U6 snRNA): specifically N6-methylates adenine in position 43 of U6 snRNAs. Also able to bind various lncRNAs, such as 7SK snRNA (7SK RNA) or 7SL RNA. Specifically binds the 3'-end of the MALAT1 long non-coding RNA. The polypeptide is RNA N(6)-adenosine-methyltransferase METTL16 (Homo sapiens (Human)).